A 61-amino-acid polypeptide reads, in one-letter code: Large ribosomal subunit protein bL32 (61 aa).

The span at 1–16 (MAVPKRKTSPSKRGMR) shows a compositional bias: basic residues. The tract at residues 1–33 (MAVPKRKTSPSKRGMRRSADGLKAPTYVEDKNS) is disordered.

Belongs to the bacterial ribosomal protein bL32 family.

The protein is Large ribosomal subunit protein bL32 of Allorhizobium ampelinum (strain ATCC BAA-846 / DSM 112012 / S4) (Agrobacterium vitis (strain S4)).